The chain runs to 177 residues: Ubiquinol-cytochrome c reductase iron-sulfur subunit (177 aa).

Residues 18-38 form a helical membrane-spanning segment; it reads IVLTASSVAAVGAACAFWPII. The 88-residue stretch at 88–175 folds into the Rieske domain; that stretch reads ARAVKMSELI…YIFISDTKIR (88 aa). Residues cysteine 120, histidine 122, cysteine 139, and histidine 142 each coordinate [2Fe-2S] cluster. An intrachain disulfide couples cysteine 125 to cysteine 141.

The protein belongs to the Rieske iron-sulfur protein family. In terms of assembly, the main subunits of complex b-c1 are: cytochrome b, cytochrome c1 and the Rieske protein. It depends on [2Fe-2S] cluster as a cofactor.

The protein resides in the cell membrane. The enzyme catalyses a quinol + 2 Fe(III)-[cytochrome c](out) = a quinone + 2 Fe(II)-[cytochrome c](out) + 2 H(+)(out). Its function is as follows. Component of the ubiquinol-cytochrome c reductase complex (complex III or cytochrome b-c1 complex), which is a respiratory chain that generates an electrochemical potential coupled to ATP synthesis. The polypeptide is Ubiquinol-cytochrome c reductase iron-sulfur subunit (petA) (Rickettsia typhi (strain ATCC VR-144 / Wilmington)).